The chain runs to 396 residues: Succinyl-diaminopimelate desuccinylase (396 aa).

Zn(2+) is bound at residue H74. Residue D76 is part of the active site. D107 contributes to the Zn(2+) binding site. Catalysis depends on E142, which acts as the Proton acceptor. Residues E143, E171, and H360 each coordinate Zn(2+).

Belongs to the peptidase M20A family. DapE subfamily. Homodimer. Requires Zn(2+) as cofactor. It depends on Co(2+) as a cofactor.

The catalysed reaction is N-succinyl-(2S,6S)-2,6-diaminopimelate + H2O = (2S,6S)-2,6-diaminopimelate + succinate. It functions in the pathway amino-acid biosynthesis; L-lysine biosynthesis via DAP pathway; LL-2,6-diaminopimelate from (S)-tetrahydrodipicolinate (succinylase route): step 3/3. In terms of biological role, catalyzes the hydrolysis of N-succinyl-L,L-diaminopimelic acid (SDAP), forming succinate and LL-2,6-diaminopimelate (DAP), an intermediate involved in the bacterial biosynthesis of lysine and meso-diaminopimelic acid, an essential component of bacterial cell walls. The polypeptide is Succinyl-diaminopimelate desuccinylase (Methylobacterium sp. (strain 4-46)).